The sequence spans 994 residues: Glycine dehydrogenase (decarboxylating) (994 aa).

The disordered stretch occupies residues Met-1 to Arg-20. Lys-716 carries the N6-(pyridoxal phosphate)lysine modification.

The protein belongs to the GcvP family. The glycine cleavage system is composed of four proteins: P, T, L and H. It depends on pyridoxal 5'-phosphate as a cofactor.

It carries out the reaction N(6)-[(R)-lipoyl]-L-lysyl-[glycine-cleavage complex H protein] + glycine + H(+) = N(6)-[(R)-S(8)-aminomethyldihydrolipoyl]-L-lysyl-[glycine-cleavage complex H protein] + CO2. Functionally, the glycine cleavage system catalyzes the degradation of glycine. The P protein binds the alpha-amino group of glycine through its pyridoxal phosphate cofactor; CO(2) is released and the remaining methylamine moiety is then transferred to the lipoamide cofactor of the H protein. In Cutibacterium acnes (strain DSM 16379 / KPA171202) (Propionibacterium acnes), this protein is Glycine dehydrogenase (decarboxylating).